Consider the following 66-residue polypeptide: MPKMKTKSAAKKRFSMTATGKVKAGPAGKRHGMIKRSTKFIRDVTGTMILSDADAKIVKKYMPYNR.

The span at 1 to 14 (MPKMKTKSAAKKRF) shows a compositional bias: basic residues. The segment at 1–34 (MPKMKTKSAAKKRFSMTATGKVKAGPAGKRHGMI) is disordered.

The protein belongs to the bacterial ribosomal protein bL35 family.

This Paracoccus denitrificans (strain Pd 1222) protein is Large ribosomal subunit protein bL35.